A 722-amino-acid chain; its full sequence is A-type ATP synthase subunit I (722 aa).

Residues 309–321 are compositionally biased toward basic and acidic residues; it reads DYKPTGHDQHVPA. The disordered stretch occupies residues 309-352; the sequence is DYKPTGHDQHVPADDGADAATDGGTTASFDETDSPPVIQDNPGP. Residues 326-335 are compositionally biased toward low complexity; it reads DAATDGGTTA. 8 helical membrane-spanning segments follow: residues 384-404, 419-439, 474-494, 505-525, 554-574, 590-610, 639-659, and 662-682; these read FYGF…LGFW, GVAM…GEVF, LAAS…FGFV, AALE…WLFS, LAAA…AGFL, IAAV…LVFG, FMLF…MHMG, and GILI…ALGV.

This sequence belongs to the V-ATPase 116 kDa subunit family. As to quaternary structure, has multiple subunits with at least A(3), B(3), C, D, E, F, H, I and proteolipid K(x).

It localises to the cell membrane. Functionally, component of the A-type ATP synthase that produces ATP from ADP in the presence of a proton gradient across the membrane. The chain is A-type ATP synthase subunit I from Halobacterium salinarum (strain ATCC 700922 / JCM 11081 / NRC-1) (Halobacterium halobium).